Reading from the N-terminus, the 100-residue chain is MARKDRLTNERLNKLFDSPFSLVNYVIKQAKNKIARGDVRSSNVAIEALNFLDLYGIQSEYAERDDRERHLSATGERRREQGFGTSRRKDPSLYNWSDVK.

A compositionally biased stretch (basic and acidic residues) spans 65–91 (DDRERHLSATGERRREQGFGTSRRKDP). The tract at residues 65–100 (DDRERHLSATGERRREQGFGTSRRKDPSLYNWSDVK) is disordered.

This sequence belongs to the chlamydial CPn_0121/CT_031/TC_0300 family.

This is an uncharacterized protein from Chlamydia trachomatis serovar D (strain ATCC VR-885 / DSM 19411 / UW-3/Cx).